Consider the following 643-residue polypeptide: MNANPKFLSADAHVDAAAVAPLPNSRKVYVTGSQPDIRVPMREITQADTPTGFGGEKNPPIYVYDTSGPYTDPDAKIDIRAGLPALRQRWIEARGDTEVLPGLSSQYGLERAADPATAELRFPGLHRNPRRAQPGKNVTQMHYARQGIITPEMEYIAIRENQRRAEYIESLKSSGPNGAKLAAMMGRQHPGQAFGAAAFGANALAEITPEFVRDEIARGRAIIPANINHPESEPMIIGRNFLVKINANIGNSAVTSSIGEEVDKMTWAIRWGGDTVMDLSTGKHIHETREWIIRNSPVPIGTVPIYQALEKVNGKAEDLTWEIFRDTLIEQAEQGVDYFTIHAGVRLQYVPLTANRMTGIVSRGGSIMAKWCLAHHKESFLYEHFEEICEIMKAYDVSFSLGDGLRPGSIYDANDEAQLGELKTLGELTQIAWKHDVQVMIEGPGHVPMQLIKENMDLQLDWCKEAPFYTLGPLTTDIAPGYDHITSGIGAAMIGWFGTAMLCYVTPKEHLGLPNKDDVKEGIITYKLAAHAADLAKGHPGAQVRDNALSKARFEFRWEDQFNIGLDPDKAREFHDETLPKDSAKVAHFCSMCGPHFCSMKITQDVREFAAQQGVSETEALKKGMEVKAVEFVKTGAEIYHRQ.

Substrate is bound by residues Asn-248, Met-277, Tyr-306, His-342, 362–364, 403–406, and Glu-442; these read SRG and DGLR. Residue His-446 participates in Zn(2+) binding. Tyr-469 contributes to the substrate binding site. Residue His-510 participates in Zn(2+) binding. The [4Fe-4S] cluster site is built by Cys-590, Cys-593, and Cys-598.

The protein belongs to the ThiC family. Homodimer. [4Fe-4S] cluster is required as a cofactor.

It carries out the reaction 5-amino-1-(5-phospho-beta-D-ribosyl)imidazole + S-adenosyl-L-methionine = 4-amino-2-methyl-5-(phosphooxymethyl)pyrimidine + CO + 5'-deoxyadenosine + formate + L-methionine + 3 H(+). It participates in cofactor biosynthesis; thiamine diphosphate biosynthesis. Catalyzes the synthesis of the hydroxymethylpyrimidine phosphate (HMP-P) moiety of thiamine from aminoimidazole ribotide (AIR) in a radical S-adenosyl-L-methionine (SAM)-dependent reaction. This chain is Phosphomethylpyrimidine synthase, found in Burkholderia cenocepacia (strain HI2424).